A 1523-amino-acid chain; its full sequence is MPPLEVKPLAGYVRSQSLRIPSSLNLSGERTISTTEPTEGNDSSSEESGDNEQISTQRLISQNKRLQSAKFEALLSERADTLTGNSGRPTLDLPDAELSTASLVAKQDAGTGMLDPREYQVELFERAKSQNTIAVLDTGSGKTLIAVLLLKHIIQNELIDRANGKPPRISFFLVDSVTLAFQQAAVLRNNLDQNVAQFFGAMGTDLWSKQTWDHQFENNMVIVCTAEILNQCLLNSYIRMDQINLLIFDEAHHTKKDHPYARIIRESYLKADPTKRPRIFGMTASPIDTKGDIIESATKLEVLLDSKIATTSKPNLLREVVRRPIEESWEYDKLDPPFATKLYQILQARFGDISSLQPVFRFTLQASSELGPCCADRAWAYALADDVLPKLEGNVRKLAQSISSPIPQCALKEISRIQEASDIVKNHSFNSPNVPGELSPKVQLLRQKLIKYFEHPTKTKCIVFTQKRYTAKMLFDLFSTLEIPYLRPGVLIGVRSGDIVGMNVSFRQQFLALVKFRSGEINCLFATSVAEEGLDIPDCNLVVRFDLYNTLIQYVQSRGRARHSSSTYASMIERYNADHAARLVEVREAEKLMQSFCETLPEDRILHGIDSEIDSILQGEEEKRTFIIRATGAKLTYHSALAILARYASSLQYEKETSAQATYVVLPQNNSFVCEVILPEKSPVRGLTGVPASKKSAAKQSAAFDTCVLLRKHKLLDDHFNSVYHRRLPAMRNARLAITSSRTNQYDMLSKPSLWGKQQGTLPEKLFATVISFIPSEPLRRRHRSIILLTRERLPDFPSFTIFLDDDIETIVVTESVEEALHISSQELEYLSTFTFRIFHDVFHKTYAEEPEKLPYWVAPAETKKSKNVSDSKSLTDWELLHLVHENEEIPSTLHPSSEALINRFVFDPWDGRYRYFTMAIDNTLHPSDPPPSFLPRRKFMESIMSYTLSGSKNARAGFLSRCNWQQPVLEVELVRLRRNLLDKMTDTEKDVETRCFVCIEPLRISAIPEEIAASCLAFPAIINRLDAYLIALEGCKTLDLSVKPEYALEAFTKDSDNTEEHRVQQIHVQRGMGKNYERLEFLGDCFLKMATSISLFVQNPDDDEFDFHVNRMCLICNKNLFNTALKKELYQYTRSRGFSRHTWYPDGLTLLHGRDHRKKISAESKHALREKTVADVCEALIGASLLSGGLHNQFDMAVKAVTAVVDSPNHKALCWADYTSSYMLPKYQTQSPDGYELDLGRKVEEKLGYRFKYPRLLHSAFTHPSYPSTWAKVPCYQRLEFLGDSLLDMVCVDDLFYRYPDKDPQWLTEHKMAMVSNKFLGALAVKLGLHTHLRHFSNPLQSQITHYAEEIQAAENESQGAVDYWLVTKDPPKCLPDMVEAYLGAAFVDSDFQFRVVEDFFQRHVKSYFHDMTIYDTFANKHPTTFLQNRLTNEYGCTNYCLKAGEIPVVDGGTVSVLAAVIVHEVVIAEGTASSGRYAKVKASEKALSVLENMGPSEFREKYHCDCRTANGSQPMDIGTAI.

The segment covering 24–38 (LNLSGERTISTTEPT) has biased composition (polar residues). Residues 24–58 (LNLSGERTISTTEPTEGNDSSSEESGDNEQISTQR) are disordered. The 182-residue stretch at 123–304 (LFERAKSQNT…ESATKLEVLL (182 aa)) folds into the Helicase ATP-binding domain. Residue 136–143 (LDTGSGKT) coordinates ATP. A DEAH box motif is present at residues 249–252 (DEAH). A Helicase C-terminal domain is found at 444-617 (LLRQKLIKYF…GIDSEIDSIL (174 aa)). A Dicer dsRNA-binding fold domain is found at 640-730 (ALAILARYAS…NSVYHRRLPA (91 aa)). The 129-residue stretch at 879 to 1007 (ELLHLVHENE…VCIEPLRISA (129 aa)) folds into the PAZ domain. RNase III domains follow at residues 1031–1190 (IALE…LSGG) and 1241–1392 (GRKV…VDSD). Mg(2+) is bound by residues Glu1281, Asp1378, and Glu1381. Positions 1426-1494 (TFLQNRLTNE…SEKALSVLEN (69 aa)) constitute a DRBM domain. Residues Cys1438, His1465, Cys1506, and Cys1508 each coordinate Zn(2+).

It belongs to the helicase family. Dicer subfamily. The cofactor is Mg(2+). Mn(2+) is required as a cofactor.

Functionally, dicer-like endonuclease involved in cleaving double-stranded RNA in the RNA interference (RNAi) pathway. Produces 21 to 25 bp dsRNAs (siRNAs) which target the selective destruction of homologous RNAs leading to sequence-specific suppression of gene expression, called post-transcriptional gene silencing (PTGS). Part of a broad host defense response against viral infection and transposons. In Aspergillus oryzae (strain ATCC 42149 / RIB 40) (Yellow koji mold), this protein is Dicer-like protein 1 (dcl1).